The chain runs to 930 residues: Xanthan lyase (930 aa).

Residues 1–25 (MLSGILIAALLMTLWGGWQPDIAHA) form the signal peptide. Residues 146 to 148 (NWW), H246, Y255, R309, 313 to 315 (RSY), and N424 contribute to the xanthan site. Catalysis depends on Y255, which acts as the Proton donor/acceptor. Residues D515, D516, and E517 each coordinate Ca(2+). R612 provides a ligand contact to xanthan. E676 contacts Ca(2+).

The protein belongs to the polysaccharide lyase 8 family. Monomer.

It is found in the secreted. It catalyses the reaction Eliminative cleavage of the terminal beta-D-mannosyl-(1-&gt;4)-beta-D-glucuronosyl linkage of the side-chain of the polysaccharide xanthan, leaving a 4-deoxy-alpha-L-threo-hex-4-enuronosyl group at the terminus of the side-chain.. Its activity is regulated as follows. Activated by Co(2+) at 1 mM. Completely inhibited by Hg(2+) but not affected by other divalent cations. Intensely inhibited by NaCl and KCl at 150 mM, in particular by the Na(+) and K(+) ions but not the Cl(-) ions. Partially inhibited by iodoacetamide and N-ethylmaleimide at 1 mM but not by dithiothreitol, reduced glutathione or 2-mercaptoethanol. Plays a role in xanthan depolymerization pathway by cleaving the linkage between the terminal mannosyl and glucuronyl residues of the side chain of xanthan to liberate pyruvylated mannose. Is highly specific for pyruvylated side-chains of xanthan and is not effective with hyaluronate, chondroitin A, gellan, heparin or pectin. The chain is Xanthan lyase from Bacillus sp. (strain GL1).